The sequence spans 421 residues: CaM kinase-like vesicle-associated protein (421 aa).

Residues 24 to 284 (YDLGQVVKSE…AQEAIAHEWI (261 aa)) form the Protein kinase domain. A disordered region spans residues 326-421 (ASEQGDTGAS…PQMLPQRKGY (96 aa)). 2 stretches are compositionally biased toward low complexity: residues 330-340 (GDTGASGLAAG) and 390-406 (QQQA…QQAR).

This sequence belongs to the protein kinase superfamily. CAMK Ser/Thr protein kinase family. As to quaternary structure, interacts with calmodulin, in the presence of calcium. It depends on Ca(2+) as a cofactor. Ubiquitously expressed.

The protein resides in the cytoplasmic vesicle membrane. Does not appear to have detectable kinase activity. This chain is CaM kinase-like vesicle-associated protein (camkv), found in Takifugu rubripes (Japanese pufferfish).